Here is a 568-residue protein sequence, read N- to C-terminus: Zinc finger protein 768 (568 aa).

The segment covering 1 to 16 (MEREASSWGLESRDVH) has biased composition (basic and acidic residues). 3 disordered regions span residues 1-223 (MERE…SLGV), 228-247 (SFTQ…FDMP), and 264-287 (LNLT…QGPR). Phosphoserine occurs at positions 17, 23, and 27. At Thr-35 the chain carries Phosphothreonine. Residues Ser-36, Ser-65, Ser-72, Ser-79, Ser-86, Ser-93, Ser-100, Ser-107, Ser-114, Ser-121, Ser-128, Ser-135, and Ser-149 each carry the phosphoserine modification. Residues 62–80 (EPQSPEFEPQSPEFESQSP) are compositionally biased toward low complexity. The segment covering 110–122 (SDPQSPEFESQSP) has biased composition (polar residues). Tyr-152 is modified (phosphotyrosine). Ser-154 is modified (phosphoserine). Positions 159–186 (FESQSPGYESQSPGYEPQNSGDGVQNSE) are enriched in polar residues. Thr-189 bears the Phosphothreonine mark. Position 191 is a phosphoserine (Ser-191). Residues 289–311 (NICGICGKSFGRGSTLIQHQRIH) form a C2H2-type 1 zinc finger. A Phosphothreonine modification is found at Thr-312. Tyr-317 carries the phosphotyrosine modification. C2H2-type zinc fingers lie at residues 317 to 339 (YKCE…QRTH), 345 to 367 (YKCP…QRTH), 373 to 395 (YKCP…QRTH), and 401 to 423 (YSCP…QRVH). Phosphoserine occurs at positions 323 and 327. At Thr-424 the chain carries Phosphothreonine. C2H2-type zinc fingers lie at residues 429–451 (FSCG…ARSH), 457–479 (FKCP…ARTH), 485–507 (YSCP…QRSH), 513–535 (YRCA…HRVH), and 541–563 (YKCD…QRTH). Phosphoserine is present on Ser-470.

It belongs to the krueppel C2H2-type zinc-finger protein family. Interacts (via zinc-finger domains) with TP53 (via N-terminus); interaction might be facilitated by TP53 oligomerization state. Interacts with ELP3. May be phosphorylated at residue 'Ser-5' of the tandem heptapeptide repeats in the N-terminus. Phosphorylation might be increased upon RAS pathway activation and negatively regulate protein stability.

It localises to the nucleus. It is found in the chromosome. Its function is as follows. Binds to mammalian-wide interspersed repeat (MIRs) sequences in euchromatin and promoter regions of genes at the consensus sequence 5'-GCTGTGTG-[N20]-CCTCTCTG-3', consisting of two anchor regions connected by a linker region; the linker region probably does not contribute to the binding specificity. Required for cell homeostasis. May be involved in transcriptional regulation. This Mus musculus (Mouse) protein is Zinc finger protein 768 (Znf768).